Consider the following 496-residue polypeptide: Ribose import ATP-binding protein RbsA (496 aa).

2 consecutive ABC transporter domains span residues 5–241 (LQMK…VGRE) and 252–496 (SPGE…VGGE). An ATP-binding site is contributed by 37-44 (GENGAGKS).

It belongs to the ABC transporter superfamily. Ribose importer (TC 3.A.1.2.1) family. The complex is composed of an ATP-binding protein (RbsA), two transmembrane proteins (RbsC) and a solute-binding protein (RbsB).

It is found in the cell membrane. The catalysed reaction is D-ribose(out) + ATP + H2O = D-ribose(in) + ADP + phosphate + H(+). Functionally, part of the ABC transporter complex RbsABC involved in ribose import. Responsible for energy coupling to the transport system. This chain is Ribose import ATP-binding protein RbsA, found in Caldanaerobacter subterraneus subsp. tengcongensis (strain DSM 15242 / JCM 11007 / NBRC 100824 / MB4) (Thermoanaerobacter tengcongensis).